The chain runs to 494 residues: Psoralen synthase (494 aa).

Residues Tyr12–Leu29 form a helical membrane-spanning segment. Heme is bound at residue Cys436.

The protein belongs to the cytochrome P450 family.

The protein localises to the endoplasmic reticulum membrane. It is found in the microsome membrane. The enzyme catalyses (7S)-marmesin + reduced [NADPH--hemoprotein reductase] + O2 = psoralen + acetone + oxidized [NADPH--hemoprotein reductase] + 2 H2O + H(+). With respect to regulation, inhibited by columbianetin. Involved in linear furanocumarin (psoralen) biosynthesis. Converts marmesin to psoralen. This chain is Psoralen synthase (CYP71AJ1), found in Ammi majus (Bishop's weed).